We begin with the raw amino-acid sequence, 295 residues long: Cyclin-G1 (295 aa).

Belongs to the cyclin family. Cyclin G subfamily. In terms of tissue distribution, high levels in skeletal muscle, ovary, kidney and colon.

It is found in the nucleus. May play a role in growth regulation. Is associated with G2/M phase arrest in response to DNA damage. May be an intermediate by which p53 mediates its role as an inhibitor of cellular proliferation. This Homo sapiens (Human) protein is Cyclin-G1 (CCNG1).